The chain runs to 298 residues: uncharacterized protein (298 aa).

10 helical membrane-spanning segments follow: residues 5–25 (ILFGVSMILLANLCFGIMSAF), 36–56 (MENVFYRSITMTLLLLLIYPF), 76–96 (VVVGGLAMLAFFYNIEKISLA), 97–117 (TATAFSQCAPIYTVLLSPLLL), 124–144 (SALISACIGLVGVVLISDPSV), 147–167 (VGLVEIIMGILSGIFVSLAYI), 181–201 (VILAFAFGMSLLGLAGMFIDI), 216–236 (ILWISLIGISGTLGQYFLTYA), 244–264 (IIAPIEYTRIVWGLLFGLYLG), and 272–292 (SSLGVALILCSGLLIALPALL). The region spanning 17–141 (LCFGIMSAFV…GLVGVVLISD (125 aa)) is the EamA 1 domain. An EamA 2 domain is found at 183 to 288 (LAFAFGMSLL…ILCSGLLIAL (106 aa)).

It belongs to the EamA transporter family.

It localises to the cell membrane. This is an uncharacterized protein from Helicobacter pylori (strain J99 / ATCC 700824) (Campylobacter pylori J99).